The primary structure comprises 106 residues: MNDSEFHRLTDTLWMTIEERLDDWDGDSDIDCEINGGVLTITFENGSKIIINRQEPLHQVWLATKQGGYHFDLKGDEWICDRSGETFWDLLEQAATQQAGEAVSFR.

The protein belongs to the frataxin family.

Involved in iron-sulfur (Fe-S) cluster assembly. May act as a regulator of Fe-S biogenesis. The protein is Iron-sulfur cluster assembly protein CyaY of Citrobacter koseri (strain ATCC BAA-895 / CDC 4225-83 / SGSC4696).